The following is a 168-amino-acid chain: Photosystem I assembly protein Ycf3 (168 aa).

TPR repeat units lie at residues 35-68 (AFAY…EIDP), 72-105 (SYIL…NPFL), and 120-153 (GEQA…TPGN).

This sequence belongs to the Ycf3 family.

The protein resides in the plastid. The protein localises to the chloroplast thylakoid membrane. In terms of biological role, essential for the assembly of the photosystem I (PSI) complex. May act as a chaperone-like factor to guide the assembly of the PSI subunits. This is Photosystem I assembly protein Ycf3 from Morus indica (Mulberry).